Here is a 507-residue protein sequence, read N- to C-terminus: Sugar transport protein 8 (507 aa).

Topologically, residues 1 to 21 (MAVVISSNGNSKSFDAKMTVY) are cytoplasmic. 12 consecutive transmembrane segments (helical) span residues 22–42 (VFICVIIAAVGGLIFGYDIGI), 79–99 (FLQLFTSSLYLAALVASFFAS), 116–136 (IFFLIGVGLAAGAVNIYMLII), 139–159 (ILLGFGVGFGNQAVPLFLSEI), 166–186 (GGLNIVFQLMVTIGILIANIV), 200–220 (IALGGAGIPALILLFGSLLIC), 281–301 (FVIGMLLQFFQQFTGINAIMF), 319–339 (LSAVVTGTINVLSTFVGIFLV), 346–366 (FLLLQSSVHMLICQLVIGIIL), 382–402 (LVVVIFVCVYVMGFAWSWGPL), 419–439 (GFALAVSCNMFFTFVIAQAFL), and 448–468 (GIFFFFSGWIVVMGLFALFFV). Topologically, residues 469-507 (PETKGVSIDDMRDSVWKLHWYWKRFMLEEDEHDVEKRTD) are cytoplasmic.

The protein belongs to the major facilitator superfamily. Sugar transporter (TC 2.A.1.1) family.

The protein localises to the membrane. Mediates an active uptake of hexoses, probably by sugar/hydrogen symport. This is Sugar transport protein 8 (STP8) from Arabidopsis thaliana (Mouse-ear cress).